Here is a 258-residue protein sequence, read N- to C-terminus: Spindlin-2B (258 aa).

A compositionally biased stretch (low complexity) spans 1 to 23; it reads MKTPNAQEAEGQQTRAAAGRATG. Residues 1-49 form a disordered region; the sequence is MKTPNAQEAEGQQTRAAAGRATGSANMTKKKVSQKKQRGRPSSQPRRNI. Basic residues predominate over residues 28–39; that stretch reads TKKKVSQKKQRG. 3 tudor-like domain regions span residues 50–99, 129–178, and 210–255; these read VGCR…LELH, IGKA…YQLL, and IGKH…YDLV. Histone H3K4me3 and H3R8me2a binding regions lie at residues E138 and 246–248; that span reads DFH.

This sequence belongs to the SPIN/STSY family. As to quaternary structure, interacts with C11orf84/SPINDOC. Detected in all the examined tissues with highest expression in liver, followed by heart, stomach, kidney, skeletal muscle, placenta, and pancreas.

Its subcellular location is the nucleus. Involved in the regulation of cell cycle progression, this activity is related to the inhibition of apoptosis following the removal of essential growth factors. Exhibits H3K4me3-binding activity. The polypeptide is Spindlin-2B (SPIN2B) (Homo sapiens (Human)).